The primary structure comprises 273 residues: Dermonecrotic toxin LsaSicTox-alphaIB1aiii (273 aa).

The active site involves H5. Positions 25 and 27 each coordinate Mg(2+). The active-site Nucleophile is H41. Disulfide bonds link C45–C51 and C47–C190. Position 85 (D85) interacts with Mg(2+).

It belongs to the arthropod phospholipase D family. Class II subfamily. The cofactor is Mg(2+). Expressed by the venom gland.

The protein localises to the secreted. The catalysed reaction is an N-(acyl)-sphingosylphosphocholine = an N-(acyl)-sphingosyl-1,3-cyclic phosphate + choline. The enzyme catalyses an N-(acyl)-sphingosylphosphoethanolamine = an N-(acyl)-sphingosyl-1,3-cyclic phosphate + ethanolamine. It catalyses the reaction a 1-acyl-sn-glycero-3-phosphocholine = a 1-acyl-sn-glycero-2,3-cyclic phosphate + choline. It carries out the reaction a 1-acyl-sn-glycero-3-phosphoethanolamine = a 1-acyl-sn-glycero-2,3-cyclic phosphate + ethanolamine. Functionally, dermonecrotic toxins cleave the phosphodiester linkage between the phosphate and headgroup of certain phospholipids (sphingolipid and lysolipid substrates), forming an alcohol (often choline) and a cyclic phosphate. This toxin acts on sphingomyelin (SM). It may also act on ceramide phosphoethanolamine (CPE), lysophosphatidylcholine (LPC) and lysophosphatidylethanolamine (LPE), but not on lysophosphatidylserine (LPS), and lysophosphatidylglycerol (LPG). It acts by transphosphatidylation, releasing exclusively cyclic phosphate products as second products. Induces dermonecrosis, hemolysis, increased vascular permeability, edema, inflammatory response, and platelet aggregation. The protein is Dermonecrotic toxin LsaSicTox-alphaIB1aiii of Loxosceles sabina (Tucson recluse spider).